The following is a 402-amino-acid chain: Sulfate adenylyltransferase (402 aa).

The protein belongs to the sulfate adenylyltransferase family.

It catalyses the reaction sulfate + ATP + H(+) = adenosine 5'-phosphosulfate + diphosphate. The protein operates within sulfur metabolism; hydrogen sulfide biosynthesis; sulfite from sulfate: step 1/3. This Thiobacillus denitrificans (strain ATCC 25259 / T1) protein is Sulfate adenylyltransferase.